A 122-amino-acid polypeptide reads, in one-letter code: Large ribosomal subunit protein uL14 (122 aa).

It belongs to the universal ribosomal protein uL14 family. As to quaternary structure, part of the 50S ribosomal subunit. Forms a cluster with proteins L3 and L19. In the 70S ribosome, L14 and L19 interact and together make contacts with the 16S rRNA in bridges B5 and B8.

Its function is as follows. Binds to 23S rRNA. Forms part of two intersubunit bridges in the 70S ribosome. This chain is Large ribosomal subunit protein uL14, found in Mycobacterium marinum (strain ATCC BAA-535 / M).